The following is a 253-amino-acid chain: Ribosomal RNA small subunit methyltransferase J (253 aa).

Residues 98-99, 114-115, 150-151, and Asp172 contribute to the S-adenosyl-L-methionine site; these read RD, ER, and SS.

This sequence belongs to the methyltransferase superfamily. RsmJ family.

It localises to the cytoplasm. It catalyses the reaction guanosine(1516) in 16S rRNA + S-adenosyl-L-methionine = N(2)-methylguanosine(1516) in 16S rRNA + S-adenosyl-L-homocysteine + H(+). In terms of biological role, specifically methylates the guanosine in position 1516 of 16S rRNA. This Shewanella pealeana (strain ATCC 700345 / ANG-SQ1) protein is Ribosomal RNA small subunit methyltransferase J.